Consider the following 208-residue polypeptide: Thymidylate kinase (208 aa).

Position 9 to 16 (9 to 16 (GGEGCGKS)) interacts with ATP.

It belongs to the thymidylate kinase family.

It catalyses the reaction dTMP + ATP = dTDP + ADP. Its function is as follows. Phosphorylation of dTMP to form dTDP in both de novo and salvage pathways of dTTP synthesis. The protein is Thymidylate kinase of Dehalococcoides mccartyi (strain CBDB1).